We begin with the raw amino-acid sequence, 371 residues long: 3-methyl-D-ornithine--L-lysine ligase (371 aa).

K18 serves as a coordination point for ATP. 19–20 (LQ) contacts L-lysine. ATP is bound by residues D39, 57 to 58 (NI), and 80 to 81 (EN). Residue E80 coordinates L-lysine. An ATP-grasp domain is found at 93–277 (EKFSCPVLFD…LIELLFRAFN (185 aa)). ADP-binding positions include K112, K139, S146, and 168–171 (EEYV). Residues 177–179 (SLE) and D233 each bind D-ornithine. The Mg(2+) site is built by E235, E247, and D249. E247 contributes to the ADP binding site. Residues 251–256 (RFPSQT) and E310 each bind D-ornithine. L-lysine-binding residues include S254 and E310.

Belongs to the PylC family. Mg(2+) serves as cofactor.

It carries out the reaction (3R)-3-methyl-D-ornithine + L-lysine + ATP = (3R)-3-methyl-D-ornithyl-N(6)-L-lysine + ADP + phosphate + H(+). It participates in amino-acid biosynthesis; L-pyrrolysine biosynthesis. Its function is as follows. Is required for the biosynthesis of pyrrolysine. Catalyzes the ATP-dependent ligation between (3R)-3-methyl-D-ornithine and L-lysine, leading to (3R)-3-methyl-D-ornithyl-N6-L-lysine. Is also involved in the synthesis of pyrroline-carboxy-lysine (Pcl), a demethylated form of pyrrolysine that is generated by the pyrrolysine biosynthetic enzymes when the growth media is supplemented with D-ornithine. The polypeptide is 3-methyl-D-ornithine--L-lysine ligase (Methanosarcina mazei (strain ATCC BAA-159 / DSM 3647 / Goe1 / Go1 / JCM 11833 / OCM 88) (Methanosarcina frisia)).